The primary structure comprises 586 residues: Serine/threonine-protein kinase TDA1 (586 aa).

The disordered stretch occupies residues 1–26 (MTTASSSASQLQQRLPEEKPWPQLSG). Residues 39 to 351 (VTNHNSLGDG…AKNLKQHPFI (313 aa)) enclose the Protein kinase domain. ATP is bound by residues 45-53 (LGDGNFSVV) and K68. D180 acts as the Proton acceptor in catalysis. The disordered stretch occupies residues 503–524 (TTPESRSNFNTPKTLSRQGSST). T504 carries the phosphothreonine modification. Residues S509 and S518 each carry the phosphoserine modification. The residue at position 538 (T538) is a Phosphothreonine. S578 carries the phosphoserine modification.

This sequence belongs to the protein kinase superfamily. Ser/Thr protein kinase family. As to quaternary structure, interacts with RIM11.

The protein resides in the cytoplasm. The protein localises to the nucleus. It catalyses the reaction L-seryl-[protein] + ATP = O-phospho-L-seryl-[protein] + ADP + H(+). The enzyme catalyses L-threonyl-[protein] + ATP = O-phospho-L-threonyl-[protein] + ADP + H(+). Its function is as follows. Serine/threonine protein kinase shown to have protein phosphorylation activity in vitro. The chain is Serine/threonine-protein kinase TDA1 (TDA1) from Saccharomyces cerevisiae (strain ATCC 204508 / S288c) (Baker's yeast).